The primary structure comprises 1086 residues: SNITAGKQQEGATCGAVRAPYVVTEAPPKIDIKVGTNWKKVLVDTGADRTIVRYHDNSGIPTGRIKLQGIGGIIEGEKWDKVVIQYKEKRIEGTIVVLPSSPVEVLGRDNMAKLDIGIIMANLEEKKIPITQVKLKEGCKGPHIAQWPLTQEKLEGLKEIVDKLEKEGKVGRAPPHWTCNTPIFCIKKKSGKWRMLIDFRELNKQTEDLAEAQLGLPHPGGLQKKKHVTILDIGDAYFTIPLYEPYRPYTCFTMLSPNNLGPCTRYYWKVLPQGWKLSPSVYQFTMQEILRDWIAKHPMIQFGIYMDDIYIGSDLDIMKHREIVEELASYIAQYGFMLPEEKRQEGYPAKWLGFELHPEKWRFQKHTLPEIKEGTITLNKLQKLVGDLVWRQSLIGKSIPNILKLMEGDRALQSERRIELRHVKEWEECRRKLAEMEGNYYDEEKDVYGQIDWGDKAIEYIVFQERGKPLWVNVVHNIKNLSQSQQIIKAAQKLTQEVIIRIGKIPWILLPGKEEDWILELQIGNITWMPSFWSCYRGSIRWKKRNVITEVVEGPTYYTDGGKKNGKGSLGFIASTGVKFRKHEEGTNQQLELRAIEEACKQGPEKMNIVTDSRYAYEFMRRNWDEEVIKNPIQARIMKLVHDKEQIGVHWVPGHKGIPQNEEIDKYISEIFLAREGSGILPKRAEDAGYDLICPQEVCIPAGQVRKIPINLRINLKEDQWAMVGTKSSFASKGVFVQGGIIDSGYQGIIQVVVYNSNDKEVIIPQGRKFAQLILMPLIHEDLEAWGETRRTERGNQGFGSTGAYWIENIPLAEEDHSKWHQDAGSLHLDFGIPRTAAEDIVQQCEVCQENKMPSTIRGSNRRGIDHWQVDYTHYEDKIILVWVETNSGLIYAERVKGETGQEFRIMTIRWYGLFAPKSLQSDNGPAFVAEPTQLLMKYLGITHTTGIPWNPQSQALVERTHQTLKNTIEKFVSMFASFDSAIAAALITLNIKRKGGLGTSPMDIFIFNKEQQRIQQQSTRNQSKFRFCYYRVRKRGHPGEWLGPTQVLWEGEGAIVIKDKNLEKYLVIAKKDVKFIPQPKEIQTE.

The Peptidase A2 domain maps to 39-110; it reads KKVLVDTGAD…SPVEVLGRDN (72 aa). Residue Asp-44 is part of the active site. One can recognise a Reverse transcriptase domain in the interval 167–356; sequence EGKVGRAPPH…YPAKWLGFEL (190 aa). Residues 551–673 form the RNase H type-1 domain; that stretch reads VVEGPTYYTD…IDKYISEIFL (123 aa). The Integrase-type zinc finger occupies 808–849; it reads ENIPLAEEDHSKWHQDAGSLHLDFGIPRTAAEDIVQQCEVCQ. The Zn(2+) site is built by His-817, His-821, Cys-845, and Cys-848. One can recognise an Integrase catalytic domain in the interval 850–1010; sequence ENKMPSTIRG…SPMDIFIFNK (161 aa). The segment at residues 1027–1079 is a DNA-binding region (integrase-type); sequence RFCYYRVRKRGHPGEWLGPTQVLWEGEGAIVIKDKNLEKYLVIAKKDVKFIPQ.

This sequence belongs to the retroviral Pol polyprotein family. Post-translationally, cleavage sites that yield the mature proteins remain to be determined.

The enzyme catalyses Endohydrolysis of RNA in RNA/DNA hybrids. Three different cleavage modes: 1. sequence-specific internal cleavage of RNA. Human immunodeficiency virus type 1 and Moloney murine leukemia virus enzymes prefer to cleave the RNA strand one nucleotide away from the RNA-DNA junction. 2. RNA 5'-end directed cleavage 13-19 nucleotides from the RNA end. 3. DNA 3'-end directed cleavage 15-20 nucleotides away from the primer terminus.. It carries out the reaction 3'-end directed exonucleolytic cleavage of viral RNA-DNA hybrid.. The catalysed reaction is dUTP + H2O = dUMP + diphosphate + H(+). It catalyses the reaction DNA(n) + a 2'-deoxyribonucleoside 5'-triphosphate = DNA(n+1) + diphosphate. Functionally, during replicative cycle of retroviruses, the reverse-transcribed viral DNA is integrated into the host chromosome by the viral integrase enzyme. RNase H activity is associated with the reverse transcriptase. This chain is Pol polyprotein (pol), found in Ovis aries (Sheep).